Consider the following 45-residue polypeptide: Large ribosomal subunit protein bL36 (45 aa).

This sequence belongs to the bacterial ribosomal protein bL36 family.

This is Large ribosomal subunit protein bL36 from Psychrobacter sp. (strain PRwf-1).